A 436-amino-acid chain; its full sequence is Putative ankyrin repeat protein FPV026 (436 aa).

6 ANK repeats span residues 63-92 (EGIR…NVNE), 101-130 (TCYS…DVNN), 135-164 (LRNT…DQNI), 168-197 (NGNI…NLEI), 201-230 (NGRT…LVDS), and 234-266 (EGYT…FLNI). The F-box domain maps to 409–436 (TSTITNLPYEVIYIIVEKMTNKELCEIR).

In Fowlpox virus (strain NVSL) (FPV), this protein is Putative ankyrin repeat protein FPV026.